We begin with the raw amino-acid sequence, 346 residues long: Calcium uniporter protein, mitochondrial (346 aa).

The Mitochondrial matrix segment spans residues 1 to 195; it reads MTKGKLLTTP…ECDKAAHRGA (195 aa). Residues 55 to 120 form a disordered region; sequence ELPPPDPQDS…GEGKDEGEFV (66 aa). Basic and acidic residues-rich tracts occupy residues 76 to 91 and 109 to 119; these read MEAKDDEIKPRKKADT and REGEGKDEGEF. Residues 196-216 traverse the membrane as a helical segment; it reads QRIALAGCGGLIGYWYIVYRL. Residues 217-226 are Mitochondrial intermembrane-facing; it reads TFETDLGWDV. A Selectivity filter motif is present at residues 224 to 232; that stretch reads WDVMEPVTY. The helical transmembrane segment at 227-248 threads the bilayer; that stretch reads MEPVTYLVGLSTLIGGYMWFLW. Glu-228 is a Ca(2+) binding site. The Mitochondrial matrix portion of the chain corresponds to 249–346; the sequence is HNREVSYRSA…KEGEEDDEDD (98 aa). The interval 306 to 346 is disordered; sequence WNETQDEGGDEKVTKALRDERKNNNGTKNKSKEGEEDDEDD. Over residues 315-328 the composition is skewed to basic and acidic residues; it reads DEKVTKALRDERKN.

It belongs to the MCU (TC 1.A.77) family. In terms of assembly, homotetramer, assembles in a dimer or dimers configuration with two interfaces.

It is found in the mitochondrion inner membrane. It carries out the reaction Ca(2+)(in) = Ca(2+)(out). Functionally, highly selective calcium channel localized to the inner mitochondrial membrane, which mediates calcium uptake into the mitochondrial matrix. Mitochondrial calcium homeostasis plays key roles in cellular physiology and regulates ATP production, cytoplasmic calcium signals and activation of cell death pathways. Sufficient to operate as a pore-forming channel without the need of calcium-sensor or auxiliary subunit. The chain is Calcium uniporter protein, mitochondrial from Cyphellophora europaea (strain CBS 101466) (Phialophora europaea).